We begin with the raw amino-acid sequence, 114 residues long: Large ribosomal subunit protein bL20 (114 aa).

Belongs to the bacterial ribosomal protein bL20 family.

Binds directly to 23S ribosomal RNA and is necessary for the in vitro assembly process of the 50S ribosomal subunit. It is not involved in the protein synthesizing functions of that subunit. In Anaeromyxobacter sp. (strain Fw109-5), this protein is Large ribosomal subunit protein bL20.